Consider the following 489-residue polypeptide: Rhamnulokinase (489 aa).

13-17 is an ATP binding site; it reads ASSGR. The cysteines at positions 68 and 222 are disulfide-linked. Substrate contacts are provided by residues G83 and 236-238; that span reads HDT. D237 (proton acceptor) is an active-site residue. Position 259 (T259) interacts with ATP. Substrate is bound at residue N296. Q304 provides a ligand contact to ATP. A disulfide bridge connects residues C353 and C370. Residue G402 coordinates ATP. C413 and C417 are oxidised to a cystine.

The protein belongs to the rhamnulokinase family. Monomer. Mg(2+) serves as cofactor.

It carries out the reaction L-rhamnulose + ATP = L-rhamnulose 1-phosphate + ADP + H(+). Its pathway is carbohydrate degradation; L-rhamnose degradation; glycerone phosphate from L-rhamnose: step 2/3. In terms of biological role, involved in the catabolism of L-rhamnose (6-deoxy-L-mannose). Catalyzes the transfer of the gamma-phosphate group from ATP to the 1-hydroxyl group of L-rhamnulose to yield L-rhamnulose 1-phosphate. This is Rhamnulokinase from Escherichia coli O127:H6 (strain E2348/69 / EPEC).